The following is a 394-amino-acid chain: Penicillopepsin-3 (394 aa).

The signal sequence occupies residues 1–20; sequence MVSFTQLQLAFLGLSALGAA. Residues 21–70 constitute a propeptide, activation peptide; that stretch reads VPVTGTSEKKTFSLNQVKVAGTKTKNPAEHYANALRKYGAEVPSHVLAAA. Positions 87-392 constitute a Peptidase A1 domain; it reads YLTPIDVGGT…DASGPRLGFA (306 aa). Active-site residues include Asp103 and Asp284. A disulfide bridge connects residues Cys320 and Cys355.

It belongs to the peptidase A1 family. In terms of assembly, monomer.

The protein localises to the secreted. It catalyses the reaction Hydrolysis of proteins with broad specificity similar to that of pepsin A, preferring hydrophobic residues at P1 and P1', but also cleaving 20-Gly-|-Glu-21 in the B chain of insulin. Clots milk, and activates trypsinogen.. In terms of biological role, secreted aspartic endopeptidase that allows assimilation of proteinaceous substrates. The scissile peptide bond is attacked by a nucleophilic water molecule activated by two aspartic residues in the active site. Shows a broad primary substrate specificity. Favors hydrophobic residues at the P1 and P1' positions, but can also activate trypsinogen and hydrolyze the B chain of insulin between positions 'Gly-20' and 'Glu-21'. This is Penicillopepsin-3 from Penicillium janthinellum (Penicillium vitale).